The following is a 510-amino-acid chain: Acyl-CoA desaturase 1 (510 aa).

Over 1 to 112 (MPTSGTTIEL…TLNNWHQHLN (112 aa)) the chain is Cytoplasmic. A helical transmembrane segment spans residues 113–133 (WLNMVLVCGMPMIGWYFALSG). Over 134–138 (KVPLH) the chain is Lumenal. A helical membrane pass occupies residues 139–159 (LNVFLFSVFYYAVGGVSITAG). The Cytoplasmic portion of the chain corresponds to 160-255 (YHRLWSHRSY…DWTIRFQHRH (96 aa)). Histidine 161, histidine 166, histidine 198, histidine 201, and histidine 202 together coordinate Fe cation. Positions 161–166 (HRLWSH) match the Histidine box-1 motif. Residues 198-202 (HRIHH) carry the Histidine box-2 motif. The helical transmembrane segment at 256-276 (YILLMLLTAFVIPTLICGYFF) threads the bilayer. Residues 277 to 280 (NDYM) are Lumenal-facing. Residues 281–301 (GGLIYAGFIRVFVIQQATFCI) form a helical membrane-spanning segment. Topologically, residues 302–510 (NSLAHYIGTQ…GEIYETGKFF (209 aa)) are cytoplasmic. Residues histidine 306, histidine 335, histidine 338, and histidine 339 each contribute to the Fe cation site. Positions 335 to 339 (HNFHH) match the Histidine box-3 motif. The 79-residue stretch at 409–487 (LPMWDKQTFL…LADMRVAVIK (79 aa)) folds into the Cytochrome b5 heme-binding domain. Positions 444 and 470 each coordinate heme.

The protein belongs to the fatty acid desaturase type 1 family. Fe(2+) is required as a cofactor.

It is found in the endoplasmic reticulum membrane. It carries out the reaction octadecanoyl-CoA + 2 Fe(II)-[cytochrome b5] + O2 + 2 H(+) = (9Z)-octadecenoyl-CoA + 2 Fe(III)-[cytochrome b5] + 2 H2O. The catalysed reaction is hexadecanoyl-CoA + 2 Fe(II)-[cytochrome b5] + O2 + 2 H(+) = (9Z)-hexadecenoyl-CoA + 2 Fe(III)-[cytochrome b5] + 2 H2O. Its function is as follows. Stearoyl-CoA desaturase that utilizes O(2) and electrons from reduced cytochrome b5 to introduce the first double bond into saturated fatty acyl-CoA substrates. Catalyzes the insertion of a cis double bond at the delta-9 position into fatty acyl-CoA substrates including palmitoyl-CoA and stearoyl-CoA. Required for the biosynthesis of membrane phospholipids, cholesterol esters and triglycerides. Regulates fatty acid desaturation, that is, the ratio of unsaturated versus saturated fatty acyl chains, by competing with the acyltransferase STC1 for the common substrate C16:0-CoA. SCT1 sequesters C16:0-CoA into lipids, thereby shielding it from desaturation by OLE1. This is Acyl-CoA desaturase 1 (OLE1) from Saccharomyces cerevisiae (strain ATCC 204508 / S288c) (Baker's yeast).